The following is a 133-amino-acid chain: ATP synthase epsilon chain, chloroplastic (133 aa).

It belongs to the ATPase epsilon chain family. F-type ATPases have 2 components, CF(1) - the catalytic core - and CF(0) - the membrane proton channel. CF(1) has five subunits: alpha(3), beta(3), gamma(1), delta(1), epsilon(1). CF(0) has three main subunits: a, b and c.

The protein resides in the plastid. It is found in the chloroplast thylakoid membrane. Produces ATP from ADP in the presence of a proton gradient across the membrane. In Vitis vinifera (Grape), this protein is ATP synthase epsilon chain, chloroplastic.